A 94-amino-acid chain; its full sequence is Large ribosomal subunit protein eL14 (94 aa).

This sequence belongs to the eukaryotic ribosomal protein eL14 family.

The polypeptide is Large ribosomal subunit protein eL14 (Methanopyrus kandleri (strain AV19 / DSM 6324 / JCM 9639 / NBRC 100938)).